Here is a 79-residue protein sequence, read N- to C-terminus: Small ribosomal subunit protein bS21 (79 aa).

Residues 59–79 (RKKMQREGLLPMKPKPVVGVR) are disordered.

This sequence belongs to the bacterial ribosomal protein bS21 family.

The chain is Small ribosomal subunit protein bS21 from Methylocella silvestris (strain DSM 15510 / CIP 108128 / LMG 27833 / NCIMB 13906 / BL2).